Here is a 126-residue protein sequence, read N- to C-terminus: Probable 4-amino-4-deoxy-L-arabinose-phosphoundecaprenol flippase subunit ArnF (126 aa).

A helical transmembrane segment spans residues 1–21 (MGFFWALLSVGLVSAAQLLLR). Residues 22-47 (SAMVALPPLTDIVAFLQHLLHFQPGT) are Periplasmic-facing. A helical membrane pass occupies residues 48-68 (FGLFFGLLGYLLSMVCWYFAL). The Cytoplasmic portion of the chain corresponds to 69–76 (HRLPLSKA). The helical transmembrane segment at 77–97 (YALLSLSYILVWAAAIWLPGW) threads the bilayer. The Periplasmic segment spans residues 98 to 100 (HEP). A helical transmembrane segment spans residues 101 to 121 (FYWQSLLGVAIIVAGVLTIFW). Over 122–126 (PVKRR) the chain is Cytoplasmic.

The protein belongs to the ArnF family. In terms of assembly, heterodimer of ArnE and ArnF.

It is found in the cell inner membrane. The protein operates within bacterial outer membrane biogenesis; lipopolysaccharide biosynthesis. Translocates 4-amino-4-deoxy-L-arabinose-phosphoundecaprenol (alpha-L-Ara4N-phosphoundecaprenol) from the cytoplasmic to the periplasmic side of the inner membrane. In Klebsiella pneumoniae subsp. pneumoniae (strain ATCC 700721 / MGH 78578), this protein is Probable 4-amino-4-deoxy-L-arabinose-phosphoundecaprenol flippase subunit ArnF.